The sequence spans 109 residues: A-type ATP synthase subunit F (109 aa).

Belongs to the V-ATPase F subunit family. As to quaternary structure, has multiple subunits with at least A(3), B(3), C, D, E, F, H, I and proteolipid K(x).

It is found in the cell membrane. Functionally, component of the A-type ATP synthase that produces ATP from ADP in the presence of a proton gradient across the membrane. This chain is A-type ATP synthase subunit F, found in Halorubrum lacusprofundi (strain ATCC 49239 / DSM 5036 / JCM 8891 / ACAM 34).